A 389-amino-acid polypeptide reads, in one-letter code: Type II methyltransferase M2.BsuMI (389 aa).

In terms of domain architecture, SAM-dependent MTase C5-type spans 1-299 (MKVVSLFSGI…ENLSQPKGSI (299 aa)). Residue cysteine 69 is part of the active site.

Belongs to the class I-like SAM-binding methyltransferase superfamily. C5-methyltransferase family. In terms of assembly, monomer. May form a complex with YdiP, also seems to be active alone.

The enzyme catalyses a 2'-deoxycytidine in DNA + S-adenosyl-L-methionine = a 5-methyl-2'-deoxycytidine in DNA + S-adenosyl-L-homocysteine + H(+). With respect to regulation, somewhat inhibited by MgCl(2) and spermidine, strongly inhibited by MnCl(2). A methylase, recognizes the double-stranded sequence 5'-YTCGAR-3', methylates C-3 on both strands, and protects the DNA from cleavage by the BsuMI endonuclease. In Bacillus subtilis (strain 168), this protein is Type II methyltransferase M2.BsuMI (ydiP).